Consider the following 433-residue polypeptide: Phosphomethylpyrimidine synthase (433 aa).

Residues N69, M98, Y127, H163, 185–187 (SRG), 226–229 (DACR), and E265 contribute to the substrate site. H269 lines the Zn(2+) pocket. Substrate is bound at residue Y292. H333 contacts Zn(2+). The [4Fe-4S] cluster site is built by C409, C412, and C416.

It belongs to the ThiC family. The cofactor is [4Fe-4S] cluster.

The enzyme catalyses 5-amino-1-(5-phospho-beta-D-ribosyl)imidazole + S-adenosyl-L-methionine = 4-amino-2-methyl-5-(phosphooxymethyl)pyrimidine + CO + 5'-deoxyadenosine + formate + L-methionine + 3 H(+). The protein operates within cofactor biosynthesis; thiamine diphosphate biosynthesis. Catalyzes the synthesis of the hydroxymethylpyrimidine phosphate (HMP-P) moiety of thiamine from aminoimidazole ribotide (AIR) in a radical S-adenosyl-L-methionine (SAM)-dependent reaction. This chain is Phosphomethylpyrimidine synthase, found in Clostridioides difficile (strain 630) (Peptoclostridium difficile).